The primary structure comprises 476 residues: 3-isopropylmalate dehydratase large subunit (476 aa).

Residues C347, C407, and C410 each coordinate [4Fe-4S] cluster. Positions 418 to 442 (LAPGERSASTSNRNFEGRQGKGGRT) are disordered.

Belongs to the aconitase/IPM isomerase family. LeuC type 1 subfamily. Heterodimer of LeuC and LeuD. Requires [4Fe-4S] cluster as cofactor.

The enzyme catalyses (2R,3S)-3-isopropylmalate = (2S)-2-isopropylmalate. It functions in the pathway amino-acid biosynthesis; L-leucine biosynthesis; L-leucine from 3-methyl-2-oxobutanoate: step 2/4. In terms of biological role, catalyzes the isomerization between 2-isopropylmalate and 3-isopropylmalate, via the formation of 2-isopropylmaleate. The sequence is that of 3-isopropylmalate dehydratase large subunit from Streptomyces coelicolor (strain ATCC BAA-471 / A3(2) / M145).